A 469-amino-acid chain; its full sequence is Siroheme synthase (469 aa).

The tract at residues 1 to 211 is precorrin-2 dehydrogenase /sirohydrochlorin ferrochelatase; it reads MSTQLQTWDF…GRTDKARAML (211 aa). NAD(+) contacts are provided by residues 29–30 and 50–51; these read EQ and DP. The residue at position 136 (S136) is a Phosphoserine. The interval 227-469 is uroporphyrinogen-III C-methyltransferase; sequence GEVYLVGAGP…TLRDRLRWMD (243 aa). P236 contributes to the S-adenosyl-L-methionine binding site. D259 functions as the Proton acceptor in the catalytic mechanism. K281 functions as the Proton donor in the catalytic mechanism. S-adenosyl-L-methionine-binding positions include 312–314, I317, 342–343, M394, and G423; these read GGD and TA.

This sequence in the N-terminal section; belongs to the precorrin-2 dehydrogenase / sirohydrochlorin ferrochelatase family. The protein in the C-terminal section; belongs to the precorrin methyltransferase family.

It catalyses the reaction uroporphyrinogen III + 2 S-adenosyl-L-methionine = precorrin-2 + 2 S-adenosyl-L-homocysteine + H(+). The catalysed reaction is precorrin-2 + NAD(+) = sirohydrochlorin + NADH + 2 H(+). The enzyme catalyses siroheme + 2 H(+) = sirohydrochlorin + Fe(2+). It functions in the pathway cofactor biosynthesis; adenosylcobalamin biosynthesis; precorrin-2 from uroporphyrinogen III: step 1/1. It participates in cofactor biosynthesis; adenosylcobalamin biosynthesis; sirohydrochlorin from precorrin-2: step 1/1. The protein operates within porphyrin-containing compound metabolism; siroheme biosynthesis; precorrin-2 from uroporphyrinogen III: step 1/1. Its pathway is porphyrin-containing compound metabolism; siroheme biosynthesis; siroheme from sirohydrochlorin: step 1/1. It functions in the pathway porphyrin-containing compound metabolism; siroheme biosynthesis; sirohydrochlorin from precorrin-2: step 1/1. Functionally, multifunctional enzyme that catalyzes the SAM-dependent methylations of uroporphyrinogen III at position C-2 and C-7 to form precorrin-2 via precorrin-1. Then it catalyzes the NAD-dependent ring dehydrogenation of precorrin-2 to yield sirohydrochlorin. Finally, it catalyzes the ferrochelation of sirohydrochlorin to yield siroheme. The sequence is that of Siroheme synthase from Hahella chejuensis (strain KCTC 2396).